We begin with the raw amino-acid sequence, 874 residues long: Alanine--tRNA ligase (874 aa).

Zn(2+) is bound by residues His562, His566, Cys665, and His669.

It belongs to the class-II aminoacyl-tRNA synthetase family. Requires Zn(2+) as cofactor.

The protein localises to the cytoplasm. It catalyses the reaction tRNA(Ala) + L-alanine + ATP = L-alanyl-tRNA(Ala) + AMP + diphosphate. Functionally, catalyzes the attachment of alanine to tRNA(Ala) in a two-step reaction: alanine is first activated by ATP to form Ala-AMP and then transferred to the acceptor end of tRNA(Ala). Also edits incorrectly charged Ser-tRNA(Ala) and Gly-tRNA(Ala) via its editing domain. This Pseudomonas aeruginosa (strain ATCC 15692 / DSM 22644 / CIP 104116 / JCM 14847 / LMG 12228 / 1C / PRS 101 / PAO1) protein is Alanine--tRNA ligase.